Here is a 153-residue protein sequence, read N- to C-terminus: Suppressor of RNA silencing (153 aa).

The C-1 stretch occupies residues 1–23 (MMATFSCVCCGTSTTSTYCGKRC). An interaction with TGB1 region spans residues 1 to 85 (MMATFSCVCC…IVSRFCGQKH (85 aa)). Positions 19–47 (CGKRCERKHVYSETRNKRLELYKKYLLEP) are basic motif (BM). Residues 60-85 (CGMPCSIAEEACDQLPIVSRFCGQKH) are C-2. The segment at 86–127 (ADLYDSLLKRSEQELLLEFLQKKMQELKLSHIVKMAKLESEV) is interaction with replication protein alpha-A. A coiled-coil region spans residues 92–132 (LLKRSEQELLLEFLQKKMQELKLSHIVKMAKLESEVNAIRK). Phosphoserine is present on S96.

The protein belongs to the virgaviridae suppressor of RNA silencing family. In terms of assembly, homooligomer. Interacts (via C-terminus) with replication protein alpha-A. Interacts (via N-terminus) with the movement protein TGB1; this interaction targets gammab-TGB1 at the periphery of chloroplasts and plasmodesmata. Interacts with host autophagy protein ATG7; this interaction disrupts the host ATG7-ATG8 interaction to promote viral infection. Interacts (via BM region) with host STY46; this interaction inhibits the viral infection. Post-translationally, phosphorylated at Ser-96 by a host PKA-like kinase; the phosphorylation at this site seems to suppress host cell death. In terms of processing, serine-phosphorylated by host STY46 kinase.

Its subcellular location is the host chloroplast envelope. The protein resides in the host endoplasmic reticulum. It is found in the host cell junction. It localises to the host plasmodesma. Functionally, suppressor of RNA-mediated gene silencing, also known as post-transcriptional gene silencing (PTGS), a mechanism of plant viral defense that limits the accumulation of viral RNAs. Promotes viral cell-to-cell long distance movement by enhancing the ATPase activity of TGB1. Enhances RNA helicase activity of replication protein alpha-A. Suppresses autophagy induced by the host as a defense mechanism against viral infection. The sequence is that of Suppressor of RNA silencing from Barley stripe mosaic virus (BSMV).